Here is a 185-residue protein sequence, read N- to C-terminus: Translation initiation factor IF-3 (185 aa).

This sequence belongs to the IF-3 family. As to quaternary structure, monomer.

It localises to the cytoplasm. Functionally, IF-3 binds to the 30S ribosomal subunit and shifts the equilibrium between 70S ribosomes and their 50S and 30S subunits in favor of the free subunits, thus enhancing the availability of 30S subunits on which protein synthesis initiation begins. The protein is Translation initiation factor IF-3 of Bacteroides thetaiotaomicron (strain ATCC 29148 / DSM 2079 / JCM 5827 / CCUG 10774 / NCTC 10582 / VPI-5482 / E50).